A 380-amino-acid chain; its full sequence is MASLAAANAEFGFDLFREMDSSQGNGNVFFSSLSIFTALTLIRLGARGDCARQIDKALHFNIPSRQGNSSNNQPGLQYQLKRVLADINSSHKDYELSIATGVFAEKVYDFHKNYIECAENLYNAKVERVDFTNDVQDTRFKINKWIENETHGKIKKVLGDSSLSSSAVMVLVNAVYFKGKWKSAFTKTDTLSCRFRSPTCPGKVVNMMHQERRFNLSTIQQPPMQVLELQYHGGISMYIMLPEDGLCEIESKLSFQNLMDWTNRRKMKSQYVNVFLPQFKIEKNYEMTHHLKSLGLKDIFDESSADLSGIASGGRLYVSKLMHKSFIEVSEEGTEATAATENNIVEKQLPESTVFRADRPFLFVIKKNDIILFTGKVSCP.

Phosphoserine is present on serine 217.

Belongs to the serpin family. Ov-serpin subfamily.

The protein localises to the cytoplasm. In terms of biological role, might function as an inhibitor of Lys-specific proteases. Might influence the maturation of megakaryocytes via its action as a serpin. The chain is Serpin B7 (Serpinb7) from Mus musculus (Mouse).